A 624-amino-acid polypeptide reads, in one-letter code: Histone-lysine N-methyltransferase, H3 lysine-9 specific SUVH4 (624 aa).

Disordered regions lie at residues 1 to 25 and 54 to 86; these read MAGK…VQKV and DDTE…KGKQ. Positions 149 to 302 constitute a YDG domain; sequence GDLPGIDVGH…FTVYKYRLKR (154 aa). The region spanning 381–443 is the Pre-SET domain; that stretch reads TGCNCRGSCT…KCVNRTSQKR (63 aa). C383, C385, C389, C395, C397, C425, C429, C431, and C435 together coordinate Zn(2+). In terms of domain architecture, SET spans 446 to 594; that stretch reads FNLEVFRSAK…PMQELTYDYG (149 aa). Residues 456–458, Y493, R548, and 551–552 contribute to the S-adenosyl-L-methionine site; these read KGW and NH. C554, C612, C614, and C619 together coordinate Zn(2+). The 17-residue stretch at 608–624 folds into the Post-SET domain; it reads KQLACYCGALNCRKRLY.

It belongs to the class V-like SAM-binding methyltransferase superfamily. Histone-lysine methyltransferase family. Suvar3-9 subfamily. Interacts with H3 histone. As to expression, expressed in leaves stems and flowers.

The protein resides in the nucleus. It is found in the chromosome. The protein localises to the centromere. The enzyme catalyses N(6)-methyl-L-lysyl(9)-[histone H3] + S-adenosyl-L-methionine = N(6),N(6)-dimethyl-L-lysyl(9)-[histone H3] + S-adenosyl-L-homocysteine + H(+). The catalysed reaction is L-lysyl(9)-[histone H3] + S-adenosyl-L-methionine = N(6)-methyl-L-lysyl(9)-[histone H3] + S-adenosyl-L-homocysteine + H(+). Its function is as follows. Histone methyltransferase. Methylates 'Lys-9' of histone H3. H3 'Lys-9' methylation represents a specific tag for epigenetic transcriptional repression. The silencing mechanism via DNA CpNpG methylation requires the targeting of chromomethylase CMT3 to methylated histones, probably through an interaction with an HP1-like adapter. By its function, KYP is directly required for the maintenance of the DNA CpNpG and asymmetric methylation. Involved in the silencing of transposable elements. This Arabidopsis thaliana (Mouse-ear cress) protein is Histone-lysine N-methyltransferase, H3 lysine-9 specific SUVH4 (SUVH4).